A 163-amino-acid polypeptide reads, in one-letter code: Zinc finger A20 and AN1 domain-containing stress-associated protein 3 (163 aa).

An A20-type zinc finger spans residues 7-41 (LQEPRLCANNCGFFGSTATQNLCSKCFRDLQHQEQ). Zn(2+) is bound by residues cysteine 13, cysteine 17, cysteine 29, and cysteine 32. A disordered region spans residues 57–101 (VGAAASSSVSPPPPPPADSKEIVEAKSEKRAAAEPEEADGPPQDP). The segment covering 74–89 (DSKEIVEAKSEKRAAA) has biased composition (basic and acidic residues). The AN1-type zinc-finger motif lies at 98–144 (PQDPKRCLTCRRRVGITGFRCRCGFVFCGTHRYAEQHECSFDFKRMG). Zn(2+) contacts are provided by cysteine 104, cysteine 107, cysteine 118, cysteine 120, cysteine 125, histidine 128, histidine 134, and cysteine 136.

In terms of biological role, may be involved in environmental stress response. This is Zinc finger A20 and AN1 domain-containing stress-associated protein 3 (SAP3) from Arabidopsis thaliana (Mouse-ear cress).